The primary structure comprises 459 residues: Glutamate--tRNA ligase 2 (459 aa).

Residues 8–18 (PSPTGYLHIGG) carry the 'HIGH' region motif. Positions 237–241 (KLSKR) match the 'KMSKS' region motif. Residue Lys-240 coordinates ATP.

The protein belongs to the class-I aminoacyl-tRNA synthetase family. Glutamate--tRNA ligase type 1 subfamily. As to quaternary structure, monomer.

It localises to the cytoplasm. It carries out the reaction tRNA(Glu) + L-glutamate + ATP = L-glutamyl-tRNA(Glu) + AMP + diphosphate. Its function is as follows. Catalyzes the attachment of glutamate to tRNA(Glu) in a two-step reaction: glutamate is first activated by ATP to form Glu-AMP and then transferred to the acceptor end of tRNA(Glu). This chain is Glutamate--tRNA ligase 2, found in Campylobacter concisus (strain 13826).